The sequence spans 151 residues: NADPH-dependent 7-cyano-7-deazaguanine reductase (151 aa).

Cysteine 51 acts as the Thioimide intermediate in catalysis. Catalysis depends on aspartate 58, which acts as the Proton donor. Residues 73–75 and 92–93 contribute to the substrate site; these read VES and HE.

This sequence belongs to the GTP cyclohydrolase I family. QueF type 1 subfamily.

The protein localises to the cytoplasm. It carries out the reaction 7-aminomethyl-7-carbaguanine + 2 NADP(+) = 7-cyano-7-deazaguanine + 2 NADPH + 3 H(+). The protein operates within tRNA modification; tRNA-queuosine biosynthesis. In terms of biological role, catalyzes the NADPH-dependent reduction of 7-cyano-7-deazaguanine (preQ0) to 7-aminomethyl-7-deazaguanine (preQ1). This chain is NADPH-dependent 7-cyano-7-deazaguanine reductase, found in Bacteroides fragilis (strain YCH46).